Here is a 147-residue protein sequence, read N- to C-terminus: Hemoglobin subunit gamma (147 aa).

In terms of domain architecture, Globin spans 3–147; sequence HFTVEEKAVI…VAIALAHKYH (145 aa). His-64 and His-93 together coordinate heme b.

This sequence belongs to the globin family. As to quaternary structure, heterotetramer of two alpha chains and two gamma chains in fetal hemoglobin (Hb F). In terms of tissue distribution, red blood cells.

Its function is as follows. Gamma chains make up the fetal hemoglobin F, in combination with alpha chains. In Cheirogaleus medius (Fat-tailed dwarf lemur), this protein is Hemoglobin subunit gamma (HBG).